Reading from the N-terminus, the 304-residue chain is Coenzyme PQQ synthesis protein B (304 aa).

The protein belongs to the PqqB family.

The protein operates within cofactor biosynthesis; pyrroloquinoline quinone biosynthesis. Its function is as follows. May be involved in the transport of PQQ or its precursor to the periplasm. This chain is Coenzyme PQQ synthesis protein B, found in Gluconobacter oxydans (strain 621H) (Gluconobacter suboxydans).